Reading from the N-terminus, the 347-residue chain is ATPase GET3 (347 aa).

Position 26 to 33 (lysine 26 to threonine 33) interacts with ATP. The active site involves aspartate 57. The ATP site is built by glutamate 241 and asparagine 268. The Zn(2+) site is built by cysteine 279 and cysteine 282.

It belongs to the arsA ATPase family. As to quaternary structure, homodimer. Component of the Golgi to ER traffic (GET) complex, which is composed of GET1, GET2 and GET3. Within the complex, GET1 and GET2 form a heterotetramer which is stabilized by phosphatidylinositol binding and which binds to the GET3 homodimer. Interacts with the chloride channel protein GEF1.

It is found in the cytoplasm. The protein resides in the endoplasmic reticulum. The protein localises to the golgi apparatus. Its function is as follows. ATPase required for the post-translational delivery of tail-anchored (TA) proteins to the endoplasmic reticulum. Recognizes and selectively binds the transmembrane domain of TA proteins in the cytosol. This complex then targets to the endoplasmic reticulum by membrane-bound receptors GET1 and GET2, where the tail-anchored protein is released for insertion. This process is regulated by ATP binding and hydrolysis. ATP binding drives the homodimer towards the closed dimer state, facilitating recognition of newly synthesized TA membrane proteins. ATP hydrolysis is required for insertion. Subsequently, the homodimer reverts towards the open dimer state, lowering its affinity for the GET1-GET2 receptor, and returning it to the cytosol to initiate a new round of targeting. Cooperates with the HDEL receptor ERD2 to mediate the ATP-dependent retrieval of resident ER proteins that contain a C-terminal H-D-E-L retention signal from the Golgi to the ER. Involved in low-level resistance to the oxyanions arsenite and arsenate, and in heat tolerance. This Meyerozyma guilliermondii (strain ATCC 6260 / CBS 566 / DSM 6381 / JCM 1539 / NBRC 10279 / NRRL Y-324) (Yeast) protein is ATPase GET3.